The chain runs to 90 residues: U7-theraphotoxin-Hhn1a 3 (90 aa).

An N-terminal signal peptide occupies residues 1 to 26 (MKTAIFTVVLALAVFAVLSFGWEANG). Residues 27 to 50 (KALSEEFTELIHEKEAASETEARE) constitute a propeptide that is removed on maturation. 3 cysteine pairs are disulfide-bonded: Cys51/Cys65, Cys58/Cys70, and Cys64/Cys81.

This sequence belongs to the neurotoxin 10 (Hwtx-1) family. 13 (Hntx-13) subfamily. In terms of tissue distribution, expressed by the venom gland.

Its subcellular location is the secreted. Ion channel inhibitor. The polypeptide is U7-theraphotoxin-Hhn1a 3 (Cyriopagopus hainanus (Chinese bird spider)).